Consider the following 533-residue polypeptide: Homeobox protein DTH-1 (533 aa).

2 disordered regions span residues 1 to 28 and 308 to 378; these read MSSNGDSVKYDTNFDREGYSTDSSNECP and LPQN…GKKR. Residues 8 to 19 are compositionally biased toward basic and acidic residues; sequence VKYDTNFDREGY. Residues 308-317 are compositionally biased toward low complexity; sequence LPQNLPNPNQ. Over residues 318–333 the composition is skewed to polar residues; the sequence is TDSIYSSSINENNQPI. The segment covering 360–371 has biased composition (low complexity); the sequence is SVENNDNENSSS. A DNA-binding region (homeobox) is located at residues 377-436; sequence KRKRRVLFSKKQILELERHFRQKKYLSAPEREHLANLIGLSPTQVKIWFQNHRYKMKRAH.

This sequence belongs to the NK-2 homeobox family. Intestine and unidentified peripheral parenchymal cells. Slightly higher levels in the cephalic region compared to other body regions.

The protein resides in the nucleus. This protein might be involved in determination and/or differentiation of nerve cells in the continuous replacement of neurons in the cephalic region. The chain is Homeobox protein DTH-1 (DTH-1) from Girardia tigrina (Planarian).